A 229-amino-acid chain; its full sequence is Ribonuclease 3 (229 aa).

The region spanning 5-134 (EQKLEQDFGI…FLGALYLDQG (130 aa)) is the RNase III domain. E47 contributes to the Mg(2+) binding site. D51 is a catalytic residue. Residues D120 and E123 each coordinate Mg(2+). Residue E123 is part of the active site. Residues 160–229 (DYKTALQERL…AKSALEQLGN (70 aa)) enclose the DRBM domain.

Belongs to the ribonuclease III family. In terms of assembly, homodimer. Mg(2+) serves as cofactor.

It is found in the cytoplasm. It carries out the reaction Endonucleolytic cleavage to 5'-phosphomonoester.. Functionally, digests double-stranded RNA. Involved in the processing of primary rRNA transcript to yield the immediate precursors to the large and small rRNAs (23S and 16S). Also processes some mRNAs, and tRNAs when they are encoded in the rRNA operon. Its function is as follows. CRISPR (clustered regularly interspaced short palindromic repeat) is an adaptive immune system that provides protection against mobile genetic elements (viruses, transposable elements and conjugative plasmids). CRISPR clusters contain spacers, sequences complementary to antecedent mobile elements, and target invading nucleic acids. CRISPR clusters are transcribed and processed into CRISPR RNA (crRNA). In this organism endogenous ribonuclease 3 and Cas9 are required for correct coprocessing of pre-crRNA and the trans-encoded small RNA (tracrRNA). Cas9, crRNA and tracrRNA are required for cleavage of invading DNA. Complements pre-crRNA and tracRNA coprocessing defects in an rnc deletion in S.pyogenes strain 370. This Streptococcus thermophilus (strain ATCC BAA-491 / LMD-9) protein is Ribonuclease 3.